A 243-amino-acid polypeptide reads, in one-letter code: Small ribosomal subunit protein eS4 (243 aa).

In terms of domain architecture, S4 RNA-binding spans 43–105; the sequence is IPLLYIVRDY…TGEHYRVLPN (63 aa).

It belongs to the eukaryotic ribosomal protein eS4 family. As to quaternary structure, part of the 30S ribosomal subunit.

In Pyrococcus furiosus (strain ATCC 43587 / DSM 3638 / JCM 8422 / Vc1), this protein is Small ribosomal subunit protein eS4.